We begin with the raw amino-acid sequence, 147 residues long: Calcium-regulated heat stable protein 1 (147 aa).

The span at 1–12 (MSSEPPPPPQPP) shows a compositional bias: pro residues. The tract at residues 1–49 (MSSEPPPPPQPPTHQTSIGLLDTPRARDRSPSPLRGNVVPSPLPTRRTR) is disordered. An N-acetylserine modification is found at serine 2. Serine 30, serine 32, and serine 41 each carry phosphoserine. At threonine 45 the chain carries Phosphothreonine. A phosphoserine mark is found at serine 52 and serine 58. Positions 62–129 (VYKGVCKCFC…KLQAVEVVIT (68 aa)) constitute a CSD domain. Phosphoserine occurs at positions 146 and 147.

As to quaternary structure, homodimer. Interacts with STYX. In terms of processing, can be phosphorylated by DYRK2 (in vitro). Dephosphorylated by calcineurin in a Ca(2+) dependent manner, and probably by PP2A or PP4 serine phosphatases in cAMP- and PKC-mediated pathways. In terms of tissue distribution, widely expressed.

It is found in the cytoplasm. The protein resides in the P-body. Its subcellular location is the cytoplasmic granule. Functionally, binds mRNA and regulates the stability of target mRNA. The sequence is that of Calcium-regulated heat stable protein 1 (Carhsp1) from Rattus norvegicus (Rat).